We begin with the raw amino-acid sequence, 485 residues long: Glutamyl-tRNA(Gln) amidotransferase subunit A (485 aa).

Active-site charge relay system residues include lysine 75 and serine 150. Serine 174 functions as the Acyl-ester intermediate in the catalytic mechanism.

The protein belongs to the amidase family. GatA subfamily. As to quaternary structure, heterotrimer of A, B and C subunits.

It catalyses the reaction L-glutamyl-tRNA(Gln) + L-glutamine + ATP + H2O = L-glutaminyl-tRNA(Gln) + L-glutamate + ADP + phosphate + H(+). Allows the formation of correctly charged Gln-tRNA(Gln) through the transamidation of misacylated Glu-tRNA(Gln) in organisms which lack glutaminyl-tRNA synthetase. The reaction takes place in the presence of glutamine and ATP through an activated gamma-phospho-Glu-tRNA(Gln). This Trichodesmium erythraeum (strain IMS101) protein is Glutamyl-tRNA(Gln) amidotransferase subunit A.